Here is a 214-residue protein sequence, read N- to C-terminus: MQAYQRDFIRFAIDRGVLRFGEFTLKSGRTSPYFFNAGLFNSGSALAQLGRFYAAAIVESGIPFDVLFGPAYKGIPLAAATAVALAEHHQRDLPWCFNRKEAKAHGEGGSLVGAPLTGDVLIIDDVITAGTAIREVMQIIESQDGAKAAGVLIALNRQERGNGELSAIQEVERDFGIPVVSIVSLTQVLQFLADDPALKQHLPAVEAYRAQYGI.

5-phospho-alpha-D-ribose 1-diphosphate is bound at residue Lys-26. 34 to 35 (FF) serves as a coordination point for orotate. 5-phospho-alpha-D-ribose 1-diphosphate contacts are provided by residues 72–73 (YK), Arg-99, Lys-100, Lys-103, His-105, and 124–132 (DDVITAGTA). Orotate contacts are provided by Thr-128 and Arg-157.

It belongs to the purine/pyrimidine phosphoribosyltransferase family. PyrE subfamily. In terms of assembly, homodimer. Requires Mg(2+) as cofactor.

The catalysed reaction is orotidine 5'-phosphate + diphosphate = orotate + 5-phospho-alpha-D-ribose 1-diphosphate. The protein operates within pyrimidine metabolism; UMP biosynthesis via de novo pathway; UMP from orotate: step 1/2. Its function is as follows. Catalyzes the transfer of a ribosyl phosphate group from 5-phosphoribose 1-diphosphate to orotate, leading to the formation of orotidine monophosphate (OMP). This is Orotate phosphoribosyltransferase from Pseudomonas fluorescens (strain ATCC BAA-477 / NRRL B-23932 / Pf-5).